Here is a 189-residue protein sequence, read N- to C-terminus: Myb-like protein T (189 aa).

Positions 121–172 (NWSPDEQKALMVEVSTLGNKSEINWFFISQQLFLKGISRNARECQRKHESIQ) constitute a Myb-like domain.

This is Myb-like protein T (mybT) from Dictyostelium discoideum (Social amoeba).